Here is a 359-residue protein sequence, read N- to C-terminus: DNA polymerase IV (359 aa).

One can recognise a UmuC domain in the interval 7–188; that stretch reads IIHIDMDAFY…IPIGKFFGVG (182 aa). Positions 11 and 106 each coordinate Mg(2+). Residue E107 is part of the active site.

Belongs to the DNA polymerase type-Y family. As to quaternary structure, monomer. The cofactor is Mg(2+).

The protein localises to the cytoplasm. It carries out the reaction DNA(n) + a 2'-deoxyribonucleoside 5'-triphosphate = DNA(n+1) + diphosphate. Its function is as follows. Poorly processive, error-prone DNA polymerase involved in untargeted mutagenesis. Copies undamaged DNA at stalled replication forks, which arise in vivo from mismatched or misaligned primer ends. These misaligned primers can be extended by PolIV. Exhibits no 3'-5' exonuclease (proofreading) activity. May be involved in translesional synthesis, in conjunction with the beta clamp from PolIII. This chain is DNA polymerase IV, found in Clostridium perfringens (strain ATCC 13124 / DSM 756 / JCM 1290 / NCIMB 6125 / NCTC 8237 / Type A).